A 247-amino-acid polypeptide reads, in one-letter code: Anamorsin homolog (247 aa).

The interval 4–128 (FKGLQKSLYI…ETGSSARLSF (125 aa)) is N-terminal SAM-like domain. The linker stretch occupies residues 129–160 (AKKNASALNVWKISGDDEELIDEEDLLDEEDK). 4 residues coordinate [2Fe-2S] cluster: Cys171, Cys180, Cys183, and Cys185. Positions 171 to 185 (CSTTGKRKACKNCSC) are fe-S binding site A. The [4Fe-4S] cluster site is built by Cys208, Cys211, Cys219, and Cys222. 2 consecutive short sequence motifs (cx2C motif) follow at residues 208–211 (CGNC) and 219–222 (CSTC). The tract at residues 208–222 (CGNCYLGDAFRCSTC) is fe-S binding site B.

Belongs to the anamorsin family. As to quaternary structure, monomer. [2Fe-2S] cluster is required as a cofactor. The cofactor is [4Fe-4S] cluster.

It localises to the cytoplasm. The protein localises to the mitochondrion intermembrane space. In terms of biological role, component of the cytosolic iron-sulfur (Fe-S) protein assembly (CIA) machinery. Required for the maturation of extramitochondrial Fe-S proteins. Part of an electron transfer chain functioning in an early step of cytosolic Fe-S biogenesis, facilitating the de novo assembly of a [4Fe-4S] cluster on the cytosolic Fe-S scaffold complex. Electrons are transferred from NADPH via a FAD- and FMN-containing diflavin oxidoreductase. Together with the diflavin oxidoreductase, also required for the assembly of the diferric tyrosyl radical cofactor of ribonucleotide reductase (RNR), probably by providing electrons for reduction during radical cofactor maturation in the catalytic small subunit. In Drosophila persimilis (Fruit fly), this protein is Anamorsin homolog.